The sequence spans 478 residues: Dynein regulatory complex subunit 4 (478 aa).

Residues 1-12 (MAPKRRGKKGKA) show a composition bias toward basic residues. Positions 1 to 32 (MAPKRRGKKGKAKGNAVVDGVAPEDMSKEQVE) are disordered. The segment at 1–114 (MAPKRRGKKG…LLYEHQNNLA (114 aa)) is regulates microtubule-binding. 2 coiled-coil regions span residues 24–201 (EDMS…DELD) and 243–427 (NNLA…LARV). Residues 115–258 (EVKTEGTVVM…NSLKEQMEDM (144 aa)) form a microtubule-binding region. The interval 357–478 (QQKTGFKNLV…GPAGLVGAPT (122 aa)) is interaction with SMO.

The protein belongs to the DRC4 family. In terms of assembly, component of the nexin-dynein regulatory complex (N-DRC). Interacts with microtubules. Interacts with SMO. Interacts (via coiled-coil domains) with RAB3B (in GTP-bound form). Interacts with DRC1. Interacts with DRC7.

Its subcellular location is the cytoplasm. It is found in the cytoskeleton. The protein localises to the cell projection. It localises to the cilium. The protein resides in the flagellum. Its subcellular location is the cilium axoneme. It is found in the cilium basal body. The protein localises to the golgi apparatus. It localises to the flagellum axoneme. Component of the nexin-dynein regulatory complex (N-DRC), a key regulator of ciliary/flagellar motility which maintains the alignment and integrity of the distal axoneme and regulates microtubule sliding in motile axonemes. Plays an important role in the assembly of the N-DRC linker. Plays dual roles at both the primary (or non-motile) cilia to regulate hedgehog signaling and in motile cilia to coordinate cilia movement. Required for proper motile cilia functioning. Positively regulates ciliary smoothened (SMO)-dependent Hedgehog (Hh) signaling pathway by facilitating the trafficking of SMO into the cilium and the stimulation of SMO activity in a GRK2-dependent manner. This chain is Dynein regulatory complex subunit 4 (Gas8), found in Rattus norvegicus (Rat).